The sequence spans 464 residues: Cysteine--tRNA ligase (464 aa).

A Zn(2+)-binding site is contributed by cysteine 29. Positions alanine 31–histidine 41 match the 'HIGH' region motif. Zn(2+) contacts are provided by cysteine 207, histidine 232, and glutamate 236. Residues lysine 263–serine 267 carry the 'KMSKS' region motif. Position 266 (lysine 266) interacts with ATP.

The protein belongs to the class-I aminoacyl-tRNA synthetase family. In terms of assembly, monomer. Zn(2+) is required as a cofactor.

The protein localises to the cytoplasm. It catalyses the reaction tRNA(Cys) + L-cysteine + ATP = L-cysteinyl-tRNA(Cys) + AMP + diphosphate. The protein is Cysteine--tRNA ligase of Rhodococcus jostii (strain RHA1).